The sequence spans 495 residues: MAALGITVALLVWMATLLFISIWKHIYSSWKLPPGPFPLPIIGNLLQLDIKNIPKSFTRLAERYGPVFTLYLGSQRAVVVHGYKPVKEVLLDYKNEFSGRGENPGFQMHKNNGIIFNNGSTWRDTRRFSLTTLRDLGMGKQGNEQRIQREAHFLLEVLRKTQGQPFDPTFVVGFAPYNVISDILFHKRFDYKDQTSLRLMSLFNENFYLLSSPWIQLYNNFPDYLQYLPGSHRKLLKNVSEVKSYALERVKDHQKSLEPSCPRGFLDTMLIEMAKERHSVDPMYTLENIAVTVADLLFAGTETTSTTLRYGLLILMKYPEVEEKLHEEIDRVIGPSRIPAVKDRLDMPYLDAVVHEIQRFIDLLPSNLLHEATQDTVFRGYVIPKGTVVIPTLDSVLHDRQEFPEPEKFKPEHFLNENGKFKYSDHFKAFSAGKRVCVGEGLARMELFLLLAAILQHFNLKSLVDPKDIDLSPIAIGFGKIPPRYKLCLIPRSKV.

298-303 (FAGTET) is a binding site for substrate. Residue Cys437 participates in heme binding.

This sequence belongs to the cytochrome P450 family. Interacts with chaperones HSP70 and HSP90; this interaction is required for initial targeting to mitochondria. Heme is required as a cofactor.

It is found in the endoplasmic reticulum membrane. The protein resides in the microsome membrane. The protein localises to the mitochondrion inner membrane. The enzyme catalyses an organic molecule + reduced [NADPH--hemoprotein reductase] + O2 = an alcohol + oxidized [NADPH--hemoprotein reductase] + H2O + H(+). The catalysed reaction is (5Z,8Z,11Z)-eicosatrienoate + reduced [NADPH--hemoprotein reductase] + O2 = 19-hydroxy-(5Z,8Z,11Z)-eicosatrienoate + oxidized [NADPH--hemoprotein reductase] + H2O + H(+). It catalyses the reaction (5Z,8Z,11Z,14Z,17Z)-eicosapentaenoate + reduced [NADPH--hemoprotein reductase] + O2 = 19-hydroxy-(5Z,8Z,11Z,14Z,17Z)-eicosapentaenoate + oxidized [NADPH--hemoprotein reductase] + H2O + H(+). It carries out the reaction (4Z,7Z,10Z,13Z,16Z,19Z)-docosahexaenoate + reduced [NADPH--hemoprotein reductase] + O2 = 21-hydroxy-(4Z,7Z,10Z,13Z,16Z,19Z)-docosahexaenoate + oxidized [NADPH--hemoprotein reductase] + H2O + H(+). The enzyme catalyses dodecanoate + reduced [NADPH--hemoprotein reductase] + O2 = 11-hydroxydodecanoate + oxidized [NADPH--hemoprotein reductase] + H2O + H(+). The catalysed reaction is tetradecanoate + reduced [NADPH--hemoprotein reductase] + O2 = 13-hydroxytetradecanoate + oxidized [NADPH--hemoprotein reductase] + H2O + H(+). It catalyses the reaction 4-nitrophenol + NADPH + O2 + H(+) = 4-nitrocatechol + NADP(+) + H2O. It functions in the pathway lipid metabolism; fatty acid metabolism. The omega-1 hydroxylase activity is stimulated by cytochrome b5. A cytochrome P450 monooxygenase involved in the metabolism of fatty acids. Mechanistically, uses molecular oxygen inserting one oxygen atom into a substrate, and reducing the second into a water molecule, with two electrons provided by NADPH via cytochrome P450 reductase (NADPH--hemoprotein reductase). Catalyzes the hydroxylation of carbon-hydrogen bonds. Hydroxylates fatty acids specifically at the omega-1 position displaying the highest catalytic activity for saturated fatty acids. May be involved in the oxidative metabolism of xenobiotics. This chain is Cytochrome P450 2E1 (CYP2E1), found in Bos taurus (Bovine).